The primary structure comprises 492 residues: Catalase isozyme B (492 aa).

The interval 1–20 is disordered; the sequence is MDPYKHRPSSGSNSTFWTTN. Polar residues predominate over residues 9 to 20; it reads SSGSNSTFWTTN. Heme is bound at residue arginine 62. Histidine 65 is a catalytic residue. Arginine 102 provides a ligand contact to heme. Asparagine 138 is a catalytic residue. Phenylalanine 151 provides a ligand contact to heme. Tyrosine 210 carries the post-translational modification Phosphotyrosine. Positions 325–348 form a cross-link, 3-(S-cysteinyl)-tyrosine (Cys-Tyr); sequence CPAIIVPGIHYSDDKLLQTRIFSY. The heme site is built by arginine 344, tyrosine 348, and arginine 355. A Peroxisome targeting signal motif is present at residues 484–492; it reads SRLNLKPNM.

This sequence belongs to the catalase family. Homotetramer. Interacts with GLO1 and GLO4; these interactions are disturbed by alpha-hydroxy-2-pyridinemethanesulfonic acid (HPMS) and salicylic acid (SA). Interacts with STRK1 at the plasma membrane. Requires heme as cofactor. Predominantly expressed in roots and, at low levels, in leaves (e.g. sheaths). Detected in seeds. Also present in panicles and culms. Observed in stems and anthers.

It is found in the peroxisome. Its subcellular location is the glyoxysome. The protein localises to the cell membrane. The catalysed reaction is 2 H2O2 = O2 + 2 H2O. Its activity is regulated as follows. Strongly inhibited by beta-mercaptoethanol, sodium azide and potassium cyanide. Slightly repressed by 3-amino-1,2,4-triazole (3-AT). Activity is repressed proportionally to increased concentration of NaCl, KCl, LiCl and MgCl(2). Occurs in almost all aerobically respiring organisms and serves to protect cells from the toxic effects of hydrogen peroxide. May prevent the excessive accumulation of H(2)O(2) during water stress in response to the accumulation of abscisic acid (ABA). Involved in the modulation of ROS levels related to root growth regulation. Required for pollen viability and floret fertility upon heat stress (HS) by detoxifying reactive oxygen species (ROS) and malondialdehyde (MDA) accumulation in developing anthers exposed to HS. The protein is Catalase isozyme B (CATB) of Oryza sativa subsp. japonica (Rice).